The chain runs to 5596 residues: Midasin (5596 aa).

Met-1 carries the post-translational modification N-acetylmethionine. AAA-ATPase protomer stretches follow at residues 307-591 (SVCK…TSKL), 659-978 (LIEQ…ASNP), 1048-1316 (KEPT…QEEI), and 1362-1616 (HIVW…NKMG). 329–336 (GPIGCGKT) is a binding site for ATP. A disordered region spans residues 517-537 (SSVGCEQAPEEVSEARRENKR). ATP-binding positions include 677-684 (GETGTGKT) and 1084-1091 (GETSVGKT). The residue at position 1177 (Thr-1177) is a Phosphothreonine. 1390 to 1397 (GDTGCGKT) contributes to the ATP binding site. Lys-1683 is modified (N6-acetyllysine). AAA-ATPase protomer regions lie at residues 1738 to 1995 (RLLR…AVFK) and 2053 to 2313 (MKCV…IYIS). Residues 1753 to 1760 (GSPGVGKT) and 2066 to 2073 (GPASVGKT) contribute to the ATP site. At Ser-1754 the chain carries Phosphoserine. A linker region spans residues 2418-4691 (SLRAHETWGD…EGEGMKDVSD (2274 aa)). The tract at residues 3989 to 4008 (LVESDKEEQPDFLPRPTDGA) is disordered. Thr-4212 is modified (phosphothreonine). Ser-4538 carries the post-translational modification Phosphoserine. Disordered regions lie at residues 4669–4688 (ATEF…GMKD) and 4700–5260 (EDTF…SRES). A compositionally biased stretch (basic and acidic residues) spans 4702-4724 (TFQKGQEKDKEDPDSKSDIKGED). Acidic residues predominate over residues 4741–4757 (ELEEQEEDDEKSDSEGG). Phosphoserine is present on residues Ser-4752 and Ser-4754. The segment covering 4758 to 4780 (DLDKHMGDLNGEEADKLDERLWG) has biased composition (basic and acidic residues). Acidic residues predominate over residues 4781–4794 (DDDEEEDEEEEDNK). Positions 4822 to 4834 (NKDKSQQDKKEEK) are enriched in basic and acidic residues. The segment covering 4835-4844 (EEAEADDGGQ) has biased composition (acidic residues). Positions 4845 to 4855 (GEDKINEQIDE) are enriched in basic and acidic residues. Over residues 4877–4888 (EALDLPDDLNLD) the composition is skewed to acidic residues. Ser-4889 carries the post-translational modification Phosphoserine. A compositionally biased stretch (acidic residues) spans 4896-4908 (EDTDNEEGEEENP). Thr-4898 is subject to Phosphothreonine. The span at 4909 to 4928 (LEIKEKPEEAGHEAEERGET) shows a compositional bias: basic and acidic residues. Residues Ser-4937 and Ser-4946 each carry the phosphoserine modification. Residues 4940–4966 (EPEEGPSEDDKAEGEEEMDTGADDQDG) show a composition bias toward acidic residues. Residues 4968-4989 (AAQHPEEHSEEQQQSVEEKDKE) are compositionally biased toward basic and acidic residues. Acidic residues predominate over residues 5007-5021 (QEEEEREDSDTEEQV). Ser-5015 is modified (phosphoserine). Over residues 5033–5046 (CGQTGVENMQNTQA) the composition is skewed to polar residues. Residues 5054-5064 (PEKEQGKEEHG) are compositionally biased toward basic and acidic residues. The span at 5088-5101 (KHTRKNTQSFKRKP) shows a compositional bias: basic residues. Positions 5105-5115 (DNERSMGDHNE) are enriched in basic and acidic residues. Residues 5132–5141 (QGPAQQPQAQ) are compositionally biased toward low complexity. Over residues 5181 to 5197 (QEEEEIEDTLMDTEEQE) the composition is skewed to acidic residues. 2 stretches are compositionally biased toward basic and acidic residues: residues 5198–5213 (EFKA…EEIK) and 5233–5260 (KTEE…SRES). The VWFA domain occupies 5384-5583 (QICLAIDDSS…ALPETLSDAL (200 aa)).

The protein belongs to the midasin family. In terms of assembly, associates with pre-60S ribosomes in the nucleoplasm. Interacts (via its hexameric AAA ATPase ring) with the PELP1 complex (via PELP1); the interaction is regulated by SUMO conjugation of PELP1 and is crucial for recruitment of MDN1 to the pre-ribosomal particle. Interacts (via VWFA/MIDAS domain) with WDR12 (via UBL domain). Interacts (via VWFA/MIDAS domain) with NLE1 (via UBL domain).

The protein localises to the nucleus. Its subcellular location is the nucleolus. It is found in the nucleoplasm. The protein resides in the cytoplasm. Functionally, nuclear chaperone required for maturation and nuclear export of pre-60S ribosome subunits. Functions at successive maturation steps to remove ribosomal factors at critical transition points, first driving the exit of early pre-60S particles from the nucleolus and then driving late pre-60S particles from the nucleus. At an early stage in 60S maturation, mediates the dissociation of the PeBoW complex (PES1-BOP1-WDR12) from early pre-60S particles, rendering them competent for export from the nucleolus to the nucleoplasm. Subsequently recruited to the nucleoplasmic particles through interaction with SUMO-conjugated PELP1 complex. This binding is only possible if the 5S RNP at the central protuberance has undergone the rotation to complete its maturation. The chain is Midasin (MDN1) from Homo sapiens (Human).